A 161-amino-acid chain; its full sequence is 18.1 kDa class I heat shock protein (161 aa).

A sHSP domain is found at 45 to 160; it reads DVAAFTNARV…QVKSIDISGA (116 aa).

Belongs to the small heat shock protein (HSP20) family. May form oligomeric structures. Binds to AKR2A.

The protein resides in the cytoplasm. This chain is 18.1 kDa class I heat shock protein (HSP18.1), found in Arabidopsis thaliana (Mouse-ear cress).